The following is a 337-amino-acid chain: Anaerobic sulfite reductase subunit C (337 aa).

The [4Fe-4S] cluster site is built by Cys115, Cys121, Cys153, Cys157, Cys180, Cys183, Cys186, Cys190, Cys212, Cys215, Cys218, and Cys222. A siroheme-binding site is contributed by Cys157. 2 4Fe-4S ferredoxin-type domains span residues 171 to 200 (AKMR…CLAL) and 203 to 232 (GKAV…RKPD).

Belongs to the nitrite and sulfite reductase 4Fe-4S domain family. The anaerobic sulfite reductase seems to consist of three subunits. The cofactor is [4Fe-4S] cluster. Siroheme is required as a cofactor.

Its subcellular location is the cytoplasm. The catalysed reaction is hydrogen sulfide + 3 NAD(+) + 3 H2O = sulfite + 3 NADH + 4 H(+). It participates in sulfur metabolism; sulfite reduction. This enzyme catalyzes the hydrogen sulfide production from sulfite. It is strictly anaerobic. It is regulated by electron acceptors rather than by cysteine. The chain is Anaerobic sulfite reductase subunit C (asrC) from Salmonella typhi.